We begin with the raw amino-acid sequence, 312 residues long: Acetyl-coenzyme A carboxylase carboxyl transferase subunit alpha (312 aa).

The CoA carboxyltransferase C-terminal domain maps to 36–286; sequence RLDKEVKSIY…KEYFLDALRT (251 aa).

The protein belongs to the AccA family. Acetyl-CoA carboxylase is a heterohexamer composed of biotin carboxyl carrier protein (AccB), biotin carboxylase (AccC) and two subunits each of ACCase subunit alpha (AccA) and ACCase subunit beta (AccD).

Its subcellular location is the cytoplasm. It catalyses the reaction N(6)-carboxybiotinyl-L-lysyl-[protein] + acetyl-CoA = N(6)-biotinyl-L-lysyl-[protein] + malonyl-CoA. The protein operates within lipid metabolism; malonyl-CoA biosynthesis; malonyl-CoA from acetyl-CoA: step 1/1. In terms of biological role, component of the acetyl coenzyme A carboxylase (ACC) complex. First, biotin carboxylase catalyzes the carboxylation of biotin on its carrier protein (BCCP) and then the CO(2) group is transferred by the carboxyltransferase to acetyl-CoA to form malonyl-CoA. The sequence is that of Acetyl-coenzyme A carboxylase carboxyl transferase subunit alpha from Helicobacter pylori (strain HPAG1).